The primary structure comprises 527 residues: Flagellar radial spoke protein 5 (527 aa).

The tract at residues 1–22 (MSEPGEEPVAAPAGPAPDPVLN) is disordered. Residues 101 to 153 (RKWNELTIQAKQLEQEVAGLKGPDAEAKQAELENVKVQIADAEAAVAEVKQSF) are a coiled coil. R191 and R366 each carry asymmetric dimethylarginine.

This sequence belongs to the aldo/keto reductase family. Asymmetrically dimethylated at Arg-191 and Arg-366 during flagellum resorption. Probably methylated by PRMT1.

It localises to the cytoplasm. It is found in the cytoskeleton. Its subcellular location is the flagellum axoneme. In terms of biological role, flagellar radial spokes contribute to the regulation of dynein arm activity and thus the pattern of flagellar bending. They consist of a thin stalk, which is attached to the a subfiber of the outer doublet microtubule, and a bulbous head, which is attached to the stalk and appears to interact with the projections from the central pair of microtubules. The sequence is that of Flagellar radial spoke protein 5 from Chlamydomonas reinhardtii (Chlamydomonas smithii).